A 59-amino-acid chain; its full sequence is Large ribosomal subunit protein uL30 (59 aa).

Belongs to the universal ribosomal protein uL30 family. As to quaternary structure, part of the 50S ribosomal subunit.

This is Large ribosomal subunit protein uL30 from Bacillus subtilis (strain 168).